The sequence spans 467 residues: Argininosuccinate lyase (467 aa).

This sequence belongs to the lyase 1 family. Argininosuccinate lyase subfamily.

It localises to the cytoplasm. It catalyses the reaction 2-(N(omega)-L-arginino)succinate = fumarate + L-arginine. Its pathway is amino-acid biosynthesis; L-arginine biosynthesis; L-arginine from L-ornithine and carbamoyl phosphate: step 3/3. This is Argininosuccinate lyase from Allorhizobium ampelinum (strain ATCC BAA-846 / DSM 112012 / S4) (Agrobacterium vitis (strain S4)).